Consider the following 430-residue polypeptide: Glutamate-1-semialdehyde 2,1-aminomutase (430 aa).

N6-(pyridoxal phosphate)lysine is present on Lys268.

Belongs to the class-III pyridoxal-phosphate-dependent aminotransferase family. HemL subfamily. Pyridoxal 5'-phosphate serves as cofactor.

It is found in the cytoplasm. The enzyme catalyses (S)-4-amino-5-oxopentanoate = 5-aminolevulinate. It participates in porphyrin-containing compound metabolism; protoporphyrin-IX biosynthesis; 5-aminolevulinate from L-glutamyl-tRNA(Glu): step 2/2. The polypeptide is Glutamate-1-semialdehyde 2,1-aminomutase (Methanopyrus kandleri (strain AV19 / DSM 6324 / JCM 9639 / NBRC 100938)).